A 599-amino-acid polypeptide reads, in one-letter code: MAVSASPVISATSSGAGVPGGLFRAEPLYSTPREPPRLTPNMINSFVVNNHSNSAGGGGRGNTNTNECRMVDMHGMKVASFLMDGQELICLPQVFDLFLKHLVGGLHTVYTKLKRLDISPVVCTVEQVRILRGLGAIQPGVNRCKLITRKDFETLFTDCTNARRKRQMTRKQAVNSSRPGRPPKRSLGVLQENARLLTHAVPGLLSPGLITPTGITAAAMAEAMKLQKMKLMAMNTLQGNGSQNGTESEPDDLNSNTGGSESSWDKDKMQSPFAAPGPQHGIAHAALAGQPGIGGAPTLNPLQQNHLLTNRLDLPFMMMPHPLLPVSLPPASVAMAMNQMNHLNTIANMAAAAQIHSPLSRAGTSVIKERIPESPSPAPSLEENHRPGSQTSSHTSSSVSSSPSQMDHHLERMEEVPVQIPIMKSPLDKIQLTPGQALPAGFPGPFIFADSLSSVETLLTNIQGLLKVALDNARIQEKQIQQEKKELRLELYREREIRENLERQLAVELQSRTTMQKRLKKEKKTKRKLQEALEFESKRREQVEQALKQATTSDSGLRMLKDTGIPDIEIENNGTPHDSAAMQGGNYYCLEMAQQLYSA.

The interval 69-155 (RMVDMHGMKV…LITRKDFETL (87 aa)) is DACHbox-N. Disordered regions lie at residues 166-186 (RQMTRKQAVNSSRPGRPPKRS), 237-280 (LQGN…GPQH), and 370-409 (RIPESPSPAPSLEENHRPGSQTSSHTSSSVSSSPSQMDHH). Over residues 237-262 (LQGNGSQNGTESEPDDLNSNTGGSES) the composition is skewed to polar residues. Low complexity predominate over residues 389-405 (SQTSSHTSSSVSSSPSQ). The DACHbox-C stretch occupies residues 453–533 (SSVETLLTNI…KTKRKLQEAL (81 aa)). Residues 459-554 (LTNIQGLLKV…QALKQATTSD (96 aa)) adopt a coiled-coil conformation.

The protein belongs to the DACH/dachshund family. In terms of assembly, interacts with SIX6 and EYA2.

It is found in the nucleus. Its function is as follows. Transcription factor that is involved in regulation of organogenesis. Seems to be a regulator for SIX1 and SIX6. Seems to act as a corepressor of SIX6 in regulating proliferation by directly repressing cyclin-dependent kinase inhibitors, including the p27Kip1 promoter. Is recruited with SIX6 to the p27Kip1 promoter in embryonal retina. SIX6 corepression also seems to involve NCOR1, TBL1, HDAC1 and HDAC3. May be involved together with PAX3, SIX1, and EYA2 in regulation of myogenesis. In the developing somite, expression of DACH2 and PAX3 is regulated by the overlying ectoderm, and DACH2 and PAX3 positively regulate each other's expression. Probably binds to DNA via its DACHbox-N domain. The sequence is that of Dachshund homolog 2 (DACH2) from Homo sapiens (Human).